Here is an 866-residue protein sequence, read N- to C-terminus: Translation initiation factor IF-2 (866 aa).

Disordered stretches follow at residues 1-63 and 92-257; these read MTND…AAVQ and VVRA…RGRS. The span at 26 to 36 shows a compositional bias: polar residues; it reads ETGQVRQSFSH. A compositionally biased stretch (basic and acidic residues) spans 92–135; the sequence is VVRAAEEAERKRLEEIERRRREEEEARLKVEEEARRKAEEEAAR. Composition is skewed to low complexity over residues 152 to 164 and 179 to 197; these read VAPA…AAPQ and PDAS…TEAP. The 169-residue stretch at 365 to 533 folds into the tr-type G domain; sequence SRPPVVTVMG…AILLQSEILD (169 aa). A G1 region spans residues 374–381; the sequence is GHVDHGKT. 374-381 contacts GTP; it reads GHVDHGKT. Positions 399–403 are G2; sequence GITQH. The G3 stretch occupies residues 421–424; sequence DTPG. GTP is bound by residues 421 to 425 and 475 to 478; these read DTPGH and NKMD. Residues 475–478 form a G4 region; it reads NKMD. The tract at residues 511–513 is G5; sequence SAK.

This sequence belongs to the TRAFAC class translation factor GTPase superfamily. Classic translation factor GTPase family. IF-2 subfamily.

The protein resides in the cytoplasm. In terms of biological role, one of the essential components for the initiation of protein synthesis. Protects formylmethionyl-tRNA from spontaneous hydrolysis and promotes its binding to the 30S ribosomal subunits. Also involved in the hydrolysis of GTP during the formation of the 70S ribosomal complex. The protein is Translation initiation factor IF-2 of Rhodospirillum rubrum (strain ATCC 11170 / ATH 1.1.1 / DSM 467 / LMG 4362 / NCIMB 8255 / S1).